The primary structure comprises 60 residues: Large ribosomal subunit protein uL30 (60 aa).

The protein belongs to the universal ribosomal protein uL30 family. Part of the 50S ribosomal subunit.

This chain is Large ribosomal subunit protein uL30, found in Polaromonas sp. (strain JS666 / ATCC BAA-500).